Here is a 243-residue protein sequence, read N- to C-terminus: Cell division protein ZipA (243 aa).

The Periplasmic segment spans residues 1–4 (MSDM). A helical membrane pass occupies residues 5-25 (AMIRIGILIAGLLLVAAIFLF). Residues 26-243 (GRPKKSPQGR…APPLTKSPRW (218 aa)) are Cytoplasmic-facing. Residues 30–89 (KSPQGRRVDKDEGQPRERREPVISSEFGVEDDAAERAEGVEQSELNLEGQDASGGNEVGK) form a disordered region. The span at 35 to 50 (RRVDKDEGQPRERREP) shows a compositional bias: basic and acidic residues.

Belongs to the ZipA family. In terms of assembly, interacts with FtsZ via their C-terminal domains.

It is found in the cell inner membrane. In terms of biological role, essential cell division protein that stabilizes the FtsZ protofilaments by cross-linking them and that serves as a cytoplasmic membrane anchor for the Z ring. Also required for the recruitment to the septal ring of downstream cell division proteins. This is Cell division protein ZipA from Xanthomonas euvesicatoria pv. vesicatoria (strain 85-10) (Xanthomonas campestris pv. vesicatoria).